The sequence spans 272 residues: MKVAFVIRKDCKRCATIAKSIIELIPPDWEKIYDTEAAKFLGGVGKDITEISADIIIAIGGDGTVLRILQNAKGPVLGINMGGLGFLTEIEIDEVGSSTYKLIRGEYKINEAMKLKVYINGRRLEDCTNEAVVHTDRIARIRQFKIYVDGHFLTTIKSDGVIVATPTGSSSYSSSAGGPLLLPTVRGMVISYLAPYSSRIKPVVVPSESTVEIKIAGNDQDSLLILDGQKEYKIKSGDTVSISMSEEKARFVSFRESIYDRLRDKVIKHVVN.

The active-site Proton acceptor is the aspartate 62. NAD(+)-binding positions include aspartate 62–glycine 63, arginine 67, asparagine 129–glutamate 130, arginine 140, lysine 157, aspartate 159, serine 170–serine 175, alanine 194, and glutamine 229.

This sequence belongs to the NAD kinase family. Requires a divalent metal cation as cofactor.

It localises to the cytoplasm. The catalysed reaction is NAD(+) + ATP = ADP + NADP(+) + H(+). Its function is as follows. Involved in the regulation of the intracellular balance of NAD and NADP, and is a key enzyme in the biosynthesis of NADP. Catalyzes specifically the phosphorylation on 2'-hydroxyl of the adenosine moiety of NAD to yield NADP. The protein is NAD kinase of Thermoplasma volcanium (strain ATCC 51530 / DSM 4299 / JCM 9571 / NBRC 15438 / GSS1).